Consider the following 577-residue polypeptide: Laccase-25 (577 aa).

The N-terminal stretch at 1 to 22 (MTLHWSLLLFIAIALVSSVAQA) is a signal peptide. 2 Plastocyanin-like domains span residues 30–147 (NVGN…PRGG) and 158–313 (KEHV…YAGA). Asn33 carries N-linked (GlcNAc...) asparagine glycosylation. Cu cation contacts are provided by His81 and His83. N-linked (GlcNAc...) asparagine glycosylation occurs at Asn109. Cu cation contacts are provided by His126 and His128. N-linked (GlcNAc...) asparagine glycans are attached at residues Asn169, Asn203, Asn208, Asn218, Asn332, Asn383, Asn396, Asn404, Asn441, and Asn459. In terms of domain architecture, Plastocyanin-like 3 spans 423-560 (DFPDTPPVVF…AMVLEVLDGP (138 aa)). Cu cation-binding residues include His477, His480, His482, His539, Cys540, His541, and His545.

The protein belongs to the multicopper oxidase family. It depends on Cu cation as a cofactor.

It localises to the secreted. It is found in the extracellular space. Its subcellular location is the apoplast. It carries out the reaction 4 hydroquinone + O2 = 4 benzosemiquinone + 2 H2O. In terms of biological role, lignin degradation and detoxification of lignin-derived products. In Oryza sativa subsp. japonica (Rice), this protein is Laccase-25 (LAC25).